Here is a 566-residue protein sequence, read N- to C-terminus: 15-cis-phytoene desaturase, chloroplastic/chromoplastic (566 aa).

A chloroplast and chromoplast-targeting transit peptide spans 1-86 (MVVFGNVSAA…ASLSASFRSA (86 aa)). FAD contacts are provided by residues Ala103, 122-123 (EA), Lys130, 147-148 (HI), and Tyr153. A substrate-binding site is contributed by Arg288. FAD-binding residues include Ile330 and Asp519. Ala527 contacts substrate. Met529 provides a ligand contact to FAD.

Belongs to the carotenoid/retinoid oxidoreductase family. In terms of assembly, homotetramer. FAD is required as a cofactor.

It is found in the plastid. Its subcellular location is the chloroplast. The protein localises to the chromoplast. It localises to the membrane. It catalyses the reaction 2 a plastoquinone + 15-cis-phytoene = 9,9',15-tri-cis-zeta-carotene + 2 a plastoquinol. The protein operates within carotenoid biosynthesis; lycopene biosynthesis. Converts phytoene into zeta-carotene via the intermediary of phytofluene by the symmetrical introduction of two double bonds at the C-11 and C-11' positions of phytoene with a concomitant isomerization of two neighboring double bonds at the C9 and C9' positions from trans to cis. The polypeptide is 15-cis-phytoene desaturase, chloroplastic/chromoplastic (PDS) (Arabidopsis thaliana (Mouse-ear cress)).